The following is a 614-amino-acid chain: Putative binding protein BMEII0691 (614 aa).

An N-terminal signal peptide occupies residues 1–28 (MNRFIAFFRSVFLIGLVATAFGALPARA).

It belongs to the bacterial solute-binding protein 5 family.

The protein localises to the periplasm. In Brucella melitensis biotype 1 (strain ATCC 23456 / CCUG 17765 / NCTC 10094 / 16M), this protein is Putative binding protein BMEII0691.